The following is a 173-amino-acid chain: Photosystem I assembly protein Ycf3 (173 aa).

TPR repeat units lie at residues 35–68 (AFAYYRDGMSAQADGEYAEALENYYEALNLEDDP), 72–105 (SYILYNIGLIHASNGEHDQALEYYHQALENNPRM), and 120–153 (GEKAKETGNSRDANSYFDQAAEYWKQAISLAPNN).

It belongs to the Ycf3 family.

Its subcellular location is the cellular thylakoid membrane. In terms of biological role, essential for the assembly of the photosystem I (PSI) complex. May act as a chaperone-like factor to guide the assembly of the PSI subunits. This chain is Photosystem I assembly protein Ycf3, found in Trichodesmium erythraeum (strain IMS101).